Consider the following 447-residue polypeptide: Probable glycine dehydrogenase (decarboxylating) subunit 1 (447 aa).

It belongs to the GcvP family. N-terminal subunit subfamily. As to quaternary structure, the glycine cleavage system is composed of four proteins: P, T, L and H. In this organism, the P 'protein' is a heterodimer of two subunits.

It catalyses the reaction N(6)-[(R)-lipoyl]-L-lysyl-[glycine-cleavage complex H protein] + glycine + H(+) = N(6)-[(R)-S(8)-aminomethyldihydrolipoyl]-L-lysyl-[glycine-cleavage complex H protein] + CO2. The glycine cleavage system catalyzes the degradation of glycine. The P protein binds the alpha-amino group of glycine through its pyridoxal phosphate cofactor; CO(2) is released and the remaining methylamine moiety is then transferred to the lipoamide cofactor of the H protein. This chain is Probable glycine dehydrogenase (decarboxylating) subunit 1, found in Bacillus cereus (strain AH187).